We begin with the raw amino-acid sequence, 600 residues long: DNA polymerase alpha subunit B (600 aa).

The disordered stretch occupies residues 112-167 (AYTTPSKGPHKRVSSTPETPLTKRSISTRSPHQLLSPSSFSPSATPSQKYSSRTNR). Over residues 125 to 140 (SSTPETPLTKRSISTR) the composition is skewed to polar residues. S126 bears the Phosphoserine mark. Phosphothreonine is present on residues T127 and T130. A phosphoserine mark is found at S141, S147, S152, and S154. Positions 141–158 (SPHQLLSPSSFSPSATPS) are enriched in low complexity.

It belongs to the DNA polymerase alpha subunit B family. As to quaternary structure, component of the alpha DNA polymerase complex (also known as the alpha DNA polymerase-primase complex) consisting of four subunits: the catalytic subunit POLA1, the regulatory subunit POLA2, and the primase complex subunits PRIM1 and PRIM2 respectively. Within the complex, POLA1 directly interacts with PRIM2. Phosphorylated in a cell cycle-dependent manner, in G2/M phase.

The protein localises to the nucleus. Functionally, accessory subunit of the DNA polymerase alpha complex (also known as the alpha DNA polymerase-primase complex) which plays an essential role in the initiation of DNA synthesis. During the S phase of the cell cycle, the DNA polymerase alpha complex (composed of a catalytic subunit POLA1, an accessory subunit POLA2 and two primase subunits, the catalytic subunit PRIM1 and the regulatory subunit PRIM2) is recruited to DNA at the replicative forks via direct interactions with MCM10 and WDHD1. The primase subunit of the polymerase alpha complex initiates DNA synthesis by oligomerising short RNA primers on both leading and lagging strands. These primers are initially extended by the polymerase alpha catalytic subunit and subsequently transferred to polymerase delta and polymerase epsilon for processive synthesis on the lagging and leading strand, respectively. The chain is DNA polymerase alpha subunit B (Pola2) from Rattus norvegicus (Rat).